We begin with the raw amino-acid sequence, 191 residues long: Protein GrpE (191 aa).

The protein belongs to the GrpE family. In terms of assembly, homodimer.

The protein localises to the cytoplasm. In terms of biological role, participates actively in the response to hyperosmotic and heat shock by preventing the aggregation of stress-denatured proteins, in association with DnaK and GrpE. It is the nucleotide exchange factor for DnaK and may function as a thermosensor. Unfolded proteins bind initially to DnaJ; upon interaction with the DnaJ-bound protein, DnaK hydrolyzes its bound ATP, resulting in the formation of a stable complex. GrpE releases ADP from DnaK; ATP binding to DnaK triggers the release of the substrate protein, thus completing the reaction cycle. Several rounds of ATP-dependent interactions between DnaJ, DnaK and GrpE are required for fully efficient folding. The protein is Protein GrpE of Listeria monocytogenes serotype 4a (strain HCC23).